The following is a 337-amino-acid chain: Protein FAM169B (337 aa).

The segment at 278 to 326 (STVHPKCSEEDTDTPGQASQEDGPTQFNHGESHKEWAVGEPERTQNGRR) is disordered. Over residues 291–306 (TPGQASQEDGPTQFNH) the composition is skewed to polar residues. Basic and acidic residues predominate over residues 307–322 (GESHKEWAVGEPERTQ).

It belongs to the FAM169 family.

The sequence is that of Protein FAM169B (Fam169b) from Mus musculus (Mouse).